The primary structure comprises 219 residues: AA11 family lytic polysaccharide monooxygenase A (219 aa).

A signal peptide spans 1 to 18; sequence MMLSKVVMGLLTASLAAA. H19 provides a ligand contact to Cu(+). 3 disulfide bridges follow: C58–C154, C94–C116, and C185–C218. A glycan (N-linked (GlcNAc...) asparagine) is linked at N80. H89 lines the Cu(+) pocket.

Belongs to the polysaccharide monooxygenase AA11 family. Cu(2+) is required as a cofactor.

Functionally, lytic polysaccharide monooxygenase (LPMO) that depolymerizes chitin via the oxidation of scissile beta-(1-4)-glycosidic bonds, yielding C1 or C4 oxidation products. Catalysis by LPMOs requires the reduction of the active-site copper from Cu(II) to Cu(I) by a reducing agent and H(2)O(2) or O(2) as a cosubstrate. Has considerable affinity for alpha-chitin and, more so, beta-chitin. Active toward both alpha-chitin and beta-chitin allomorphs and enhances chitin degradation by an endoacting chitinase, in particular for alpha-chitin, and so plays a role in fungal chitin turnover. The catalytic activity increases when supplying reactions with hydrogen peroxide, confirming that it has peroxygenase activity. Does not show activity on phosphoric acid-swollen cellulose (PASC), Avicel, tamarind xyloglucan, birchwood xylan, beechwood xylan, acetyl glucuronoxylan from aspen, ivory nut mannan, acetylated konjac glucomannan, potato starch, heparin, hyaluronic acid, and chitosan. This is AA11 family lytic polysaccharide monooxygenase A from Aspergillus fumigatus (strain CBS 144.89 / FGSC A1163 / CEA10) (Neosartorya fumigata).